Consider the following 129-residue polypeptide: Small ribosomal subunit protein uS11c (129 aa).

Belongs to the universal ribosomal protein uS11 family. As to quaternary structure, part of the 30S ribosomal subunit.

The protein localises to the plastid. It localises to the chloroplast. This Euglena gracilis protein is Small ribosomal subunit protein uS11c.